The chain runs to 267 residues: Small ribosomal subunit protein mS23 (267 aa).

The tract at residues 230–267 (VKTASKDGKSSNGSMGAEDVVEKTTSAWETEFVEEESS) is disordered.

The protein belongs to the mitochondrion-specific ribosomal protein mS23 family. In terms of assembly, component of the mitochondrial small ribosomal subunit.

The protein resides in the mitochondrion. In Meyerozyma guilliermondii (strain ATCC 6260 / CBS 566 / DSM 6381 / JCM 1539 / NBRC 10279 / NRRL Y-324) (Yeast), this protein is Small ribosomal subunit protein mS23 (RSM25).